The sequence spans 355 residues: MFADKLRPFLDRYNEISALLGDPNIINDIEKMTKLSKEQSSIEPIKNAASQYLQTLDDIEENKALLDDAELGELAREELKSAQIRKEELENEIKILLLPKDPNDDKNIFLEIRAGTGGDEAALFVGDLFNAYIRYADLRGYKFEIVSQSEGSAGGFKEIILLIKGKGAYSRLKFEGGTHRVQRVPETESQGRVHTSAVTVAIMPEVEDSEIEINPNDLRIDVMRSSGHGGQSVNTTDSAVRITHIPTGLVVTNQDGKSQHKNKEAAMKVLKARLYEMQEAERIAKETSERKSQVGTGDRSGRIRTYNFPQNRISDHRINLTLYRLDAIMAGGLFDEIIEPLIAHHQAEAITDAGL.

Glutamine 231 bears the N5-methylglutamine mark. Positions 283–292 (IAKETSERKS) are enriched in basic and acidic residues. The disordered stretch occupies residues 283 to 303 (IAKETSERKSQVGTGDRSGRI).

It belongs to the prokaryotic/mitochondrial release factor family. Methylated by PrmC. Methylation increases the termination efficiency of RF1.

Its subcellular location is the cytoplasm. Its function is as follows. Peptide chain release factor 1 directs the termination of translation in response to the peptide chain termination codons UAG and UAA. This chain is Peptide chain release factor 1, found in Campylobacter curvus (strain 525.92).